Here is a 488-residue protein sequence, read N- to C-terminus: Glutamyl-tRNA(Gln) amidotransferase subunit A (488 aa).

Catalysis depends on charge relay system residues Lys77 and Ser152. Ser176 functions as the Acyl-ester intermediate in the catalytic mechanism.

The protein belongs to the amidase family. GatA subfamily. Heterotrimer of A, B and C subunits.

It carries out the reaction L-glutamyl-tRNA(Gln) + L-glutamine + ATP + H2O = L-glutaminyl-tRNA(Gln) + L-glutamate + ADP + phosphate + H(+). Allows the formation of correctly charged Gln-tRNA(Gln) through the transamidation of misacylated Glu-tRNA(Gln) in organisms which lack glutaminyl-tRNA synthetase. The reaction takes place in the presence of glutamine and ATP through an activated gamma-phospho-Glu-tRNA(Gln). The protein is Glutamyl-tRNA(Gln) amidotransferase subunit A of Streptococcus suis (strain 05ZYH33).